A 1751-amino-acid chain; its full sequence is Non-reducing polyketide synthase afvB (1751 aa).

Residues 19 to 249 (FRRLRLHSKC…PLPVYGGPCH (231 aa)) are N-terminal acylcarrier protein transacylase domain (SAT). Residues 381 to 811 (HEKIAVIGMS…GGNTSLLLEE (431 aa)) enclose the Ketosynthase family 3 (KS3) domain. Residues Cys554, His689, and His730 each act as for beta-ketoacyl synthase activity in the active site. Residues 910-1228 (FVFSGQGSFS…SMSALHSAGV (319 aa)) are malonyl-CoA:ACP transacylase (MAT) domain. The interval 1291 to 1607 (TALVHHILEE…PRILMSRFFD (317 aa)) is product template (PT) domain. Residues 1295 to 1429 (HHILEESFGK…GVVTCGDSHS (135 aa)) form an N-terminal hotdog fold region. Positions 1295–1603 (HHILEESFGK…LRPLPRILMS (309 aa)) constitute a PKS/mFAS DH domain. The active-site Proton acceptor; for dehydratase activity is the His1327. The segment at 1456–1603 (LASRVSKDLV…LRPLPRILMS (148 aa)) is C-terminal hotdog fold. Asp1514 serves as the catalytic Proton donor; for dehydratase activity. The segment at 1610–1670 (DSQYGQMAQQ…KAPISGSWPN (61 aa)) is disordered. Residues 1612 to 1657 (QYGQMAQQEPSTALPSTPQHTSSAKTTESTPSQQDESDNTSLATPE) show a composition bias toward polar residues. The Carrier domain maps to 1670–1747 (NANSQLVRDA…DLKAYLEGNQ (78 aa)). Ser1707 is modified (O-(pantetheine 4'-phosphoryl)serine).

Requires pantetheine 4'-phosphate as cofactor. Expressed mainly in sclerotia, with expression levels 20-fold and 10-fold greater than the expression levels of this gene found in mycelium and conidia, respectively.

The protein operates within secondary metabolite biosynthesis. In terms of biological role, non-reducing polyketide synthase (NRPKS); part of the gene cluster that mediates the biosynthesis of aflavarin, a bicoumarin that exhibits anti-insectan activity against the fungivorous beetle C.hemipterus. Catalyzes the formation of the aromatic polyketide from acetyl coenzyme A and seven malonyl coenzyme A molecules. The sequence is that of Non-reducing polyketide synthase afvB from Aspergillus flavus (strain ATCC 200026 / FGSC A1120 / IAM 13836 / NRRL 3357 / JCM 12722 / SRRC 167).